The chain runs to 104 residues: Type VII secretion system extracellular protein B (104 aa).

It belongs to the WXG100 family. In terms of assembly, homodimer. When mixed with EsxA does not form heterodimers.

It is found in the secreted. In terms of biological role, virulence factor that is important for the establishment of infection in the host. EsxB is required for EsxA synthesis as well as secretion. Mediates together with EsxA the release of S.aureus from the host cell. Also inhibits host cytokine production and thus modulates dendritic cell-mediated immunity. The polypeptide is Type VII secretion system extracellular protein B (Staphylococcus aureus (strain MSSA476)).